We begin with the raw amino-acid sequence, 201 residues long: Casparian strip membrane protein 7 (201 aa).

Acidic residues predominate over residues 1-11 (MEAGEEIEDGE). The tract at residues 1–26 (MEAGEEIEDGEPSTPTYKAHHPPPHL) is disordered. The Cytoplasmic segment spans residues 1–34 (MEAGEEIEDGEPSTPTYKAHHPPPHLPPPMRSSG). Residues 35–55 (VSLVLSVADLVLRFVAIGGTA) traverse the membrane as a helical segment. Residues 56 to 86 (GSAIAMATTSETLPFAAPFVRFRAEYSDLPT) lie on the Extracellular side of the membrane. A helical membrane pass occupies residues 87-107 (LMFFVVASSVVCAYLVLSLPA). Residues 108 to 128 (SVVHVVRPGARSSRAILAFLD) are Cytoplasmic-facing. Residues 129-149 (TVMLALLTASASAAAAIVYLA) traverse the membrane as a helical segment. The Extracellular portion of the chain corresponds to 150 to 171 (HRGSARANWLGICQQFTSFCQR). Residues 172 to 192 (ITASLVGSFAAAVVLVALVFL) traverse the membrane as a helical segment. Residues 193–201 (SALSLARRA) are Cytoplasmic-facing.

It belongs to the Casparian strip membrane proteins (CASP) family. Homodimer and heterodimers.

It localises to the cell membrane. Its function is as follows. Regulates membrane-cell wall junctions and localized cell wall deposition. Required for establishment of the Casparian strip membrane domain (CSD) and the subsequent formation of Casparian strips, a cell wall modification of the root endodermis that determines an apoplastic barrier between the intraorganismal apoplasm and the extraorganismal apoplasm and prevents lateral diffusion. The sequence is that of Casparian strip membrane protein 7 from Oryza sativa subsp. japonica (Rice).